A 91-amino-acid polypeptide reads, in one-letter code: Secretoglobin family 3A member 2 (91 aa).

A signal peptide spans 1 to 21 (MKLVSIFLLVTIGICGYSATA).

The protein belongs to the secretoglobin family. UGRP subfamily. Homodimer; disulfide-linked. Monomer. Interacts with APOA1. In terms of tissue distribution, highly expressed in lung where it localizes to epithelial cells of the trachea, bronchus and bronchioles (at protein level). Expressed in club cells of the bronchioles. Also detected in the anterior and posterior lobes of the pituitary gland where it may localize to gonadotropic cells (at protein level). Not detected in other tissues tested.

Its subcellular location is the secreted. Its function is as follows. Secreted cytokine-like protein. Binds to the scavenger receptor MARCO. Can also bind to pathogens including the Gram-positive bacterium L.monocytogenes, the Gram-negative bacterium P.aeruginosa, and yeast. Strongly inhibits phospholipase A2 (PLA2G1B) activity. Seems to have anti-inflammatory effects in respiratory epithelium. Also has anti-fibrotic activity in lung. May play a role in fetal lung development and maturation. Promotes branching morphogenesis during early stages of lung development. In the pituitary, may inhibit production of follicle-stimulating hormone (FSH) and luteinizing hormone (LH). The polypeptide is Secretoglobin family 3A member 2 (Scgb3a2) (Mus musculus (Mouse)).